The chain runs to 135 residues: Sex-regulated protein janus-A (135 aa).

Lys-37 is a substrate binding site. Residue His-63 is the Proton acceptor of the active site. 104-106 (SQG) contacts substrate.

The protein belongs to the janus family.

Its function is as follows. JanA and janB regulate somatic sex differentiation. The sequence is that of Sex-regulated protein janus-A (janA) from Drosophila orena (Fruit fly).